The chain runs to 200 residues: MIRLFIAEDQRMLLGALGSLLDLEEDMTVIGQALNGEEALHAILKLEPDVCIMDIEMPVRSGLNVAEELMKKGCVSKVIILTTFARPGYFERAVKAGAHGYLLKDGEIDDLADAIRKCVKGKRVFSPELTFNMMRDENPLTVREQEILRLAALGKTTKDITLELYLSQGTVRNYISEIIQKLNAKNRTEAASIAEEKGWI.

Residues 3-119 (RLFIAEDQRM…DLADAIRKCV (117 aa)) form the Response regulatory domain. Asp-54 bears the 4-aspartylphosphate mark. Positions 133–198 (MMRDENPLTV…EAASIAEEKG (66 aa)) constitute an HTH luxR-type domain. Positions 157–176 (TKDITLELYLSQGTVRNYIS) form a DNA-binding region, H-T-H motif.

Post-translationally, phosphorylated by YvfT.

It localises to the cytoplasm. Its function is as follows. Member of the two-component regulatory system YvfT/YvfU. This is an uncharacterized protein from Bacillus subtilis (strain 168).